A 453-amino-acid polypeptide reads, in one-letter code: Allantoinase (453 aa).

Zn(2+) is bound by residues H59, H61, K146, H186, H242, and D315. N6-carboxylysine is present on K146.

It belongs to the metallo-dependent hydrolases superfamily. Allantoinase family. In terms of assembly, homotetramer. Zn(2+) is required as a cofactor. In terms of processing, carboxylation allows a single lysine to coordinate two zinc ions.

The catalysed reaction is (S)-allantoin + H2O = allantoate + H(+). It participates in nitrogen metabolism; (S)-allantoin degradation; allantoate from (S)-allantoin: step 1/1. In terms of biological role, catalyzes the conversion of allantoin (5-ureidohydantoin) to allantoic acid by hydrolytic cleavage of the five-member hydantoin ring. This Escherichia coli O127:H6 (strain E2348/69 / EPEC) protein is Allantoinase.